The sequence spans 216 residues: Pyridoxine/pyridoxamine 5'-phosphate oxidase (216 aa).

Residues 65–70 (RMVLLK), 80–81 (YT), Arg-86, Lys-87, and Gln-109 contribute to the FMN site. Lys-70 provides a ligand contact to substrate. Tyr-127, Arg-131, and Ser-135 together coordinate substrate. Residues 144 to 145 (QS) and Trp-189 contribute to the FMN site. Position 195 to 197 (195 to 197 (RLH)) interacts with substrate. Arg-199 is an FMN binding site.

This sequence belongs to the pyridoxamine 5'-phosphate oxidase family. Homodimer. The cofactor is FMN.

It carries out the reaction pyridoxamine 5'-phosphate + O2 + H2O = pyridoxal 5'-phosphate + H2O2 + NH4(+). The enzyme catalyses pyridoxine 5'-phosphate + O2 = pyridoxal 5'-phosphate + H2O2. The protein operates within cofactor metabolism; pyridoxal 5'-phosphate salvage; pyridoxal 5'-phosphate from pyridoxamine 5'-phosphate: step 1/1. It participates in cofactor metabolism; pyridoxal 5'-phosphate salvage; pyridoxal 5'-phosphate from pyridoxine 5'-phosphate: step 1/1. Catalyzes the oxidation of either pyridoxine 5'-phosphate (PNP) or pyridoxamine 5'-phosphate (PMP) into pyridoxal 5'-phosphate (PLP). The protein is Pyridoxine/pyridoxamine 5'-phosphate oxidase of Sphingopyxis alaskensis (strain DSM 13593 / LMG 18877 / RB2256) (Sphingomonas alaskensis).